A 353-amino-acid chain; its full sequence is Photosystem II D2 protein (353 aa).

Thr-2 is modified (N-acetylthreonine). At Thr-2 the chain carries Phosphothreonine. Residues 41–61 (CAYFAVGGWFTGTTFVTSWYT) form a helical membrane-spanning segment. His-118 serves as a coordination point for chlorophyll a. A helical transmembrane segment spans residues 125–141 (GFMLRQFELARSVQLRP). Residues Gln-130 and Asn-143 each contribute to the pheophytin a site. The helical transmembrane segment at 153–166 (VFVSVFLIYPLGQS) threads the bilayer. A chlorophyll a-binding site is contributed by His-198. The chain crosses the membrane as a helical span at residues 208 to 228 (AALLCAIHGATVENTLFEDGD). 2 residues coordinate a plastoquinone: His-215 and Phe-262. Fe cation is bound at residue His-215. Residue His-269 coordinates Fe cation. A helical membrane pass occupies residues 279–295 (GLWMSALGVVGLALNLR).

This sequence belongs to the reaction center PufL/M/PsbA/D family. As to quaternary structure, PSII is composed of 1 copy each of membrane proteins PsbA, PsbB, PsbC, PsbD, PsbE, PsbF, PsbH, PsbI, PsbJ, PsbK, PsbL, PsbM, PsbT, PsbX, PsbY, PsbZ, Psb30/Ycf12, at least 3 peripheral proteins of the oxygen-evolving complex and a large number of cofactors. It forms dimeric complexes. The D1/D2 heterodimer binds P680, chlorophylls that are the primary electron donor of PSII, and subsequent electron acceptors. It shares a non-heme iron and each subunit binds pheophytin, quinone, additional chlorophylls, carotenoids and lipids. There is also a Cl(-1) ion associated with D1 and D2, which is required for oxygen evolution. The PSII complex binds additional chlorophylls, carotenoids and specific lipids. serves as cofactor.

It localises to the plastid. The protein localises to the chloroplast thylakoid membrane. The catalysed reaction is 2 a plastoquinone + 4 hnu + 2 H2O = 2 a plastoquinol + O2. Photosystem II (PSII) is a light-driven water:plastoquinone oxidoreductase that uses light energy to abstract electrons from H(2)O, generating O(2) and a proton gradient subsequently used for ATP formation. It consists of a core antenna complex that captures photons, and an electron transfer chain that converts photonic excitation into a charge separation. The D1/D2 (PsbA/PsbD) reaction center heterodimer binds P680, the primary electron donor of PSII as well as several subsequent electron acceptors. D2 is needed for assembly of a stable PSII complex. This chain is Photosystem II D2 protein, found in Atropa belladonna (Belladonna).